Here is a 659-residue protein sequence, read N- to C-terminus: DNA helicase/primase complex-associated protein (659 aa).

The protein belongs to the herpesviridae HEPA family. In terms of assembly, associates with the primase and the helicase to form the helicase-primase complex. Interacts with the origin-binding protein. Interacts with the polymerase catalytic subunit.

It localises to the host nucleus. Component of the helicase/primase complex. Unwinds the DNA at the replication forks and generates single-stranded DNA for both leading and lagging strand synthesis. The primase synthesizes short RNA primers on the lagging strand that the polymerase presumably elongates using dNTPs. The primase-associated factor has no known catalytic activity in the complex and may serve to facilitate the formation of the replisome by directly interacting with the origin-binding protein and the polymerase. The protein is DNA helicase/primase complex-associated protein (U74) of Human herpesvirus 7 (strain JI) (HHV-7).